Here is a 251-residue protein sequence, read N- to C-terminus: Imidazole glycerol phosphate synthase subunit HisF (251 aa).

Residues D11 and D130 contribute to the active site.

This sequence belongs to the HisA/HisF family. In terms of assembly, heterodimer of HisH and HisF.

It localises to the cytoplasm. The enzyme catalyses 5-[(5-phospho-1-deoxy-D-ribulos-1-ylimino)methylamino]-1-(5-phospho-beta-D-ribosyl)imidazole-4-carboxamide + L-glutamine = D-erythro-1-(imidazol-4-yl)glycerol 3-phosphate + 5-amino-1-(5-phospho-beta-D-ribosyl)imidazole-4-carboxamide + L-glutamate + H(+). It functions in the pathway amino-acid biosynthesis; L-histidine biosynthesis; L-histidine from 5-phospho-alpha-D-ribose 1-diphosphate: step 5/9. Its function is as follows. IGPS catalyzes the conversion of PRFAR and glutamine to IGP, AICAR and glutamate. The HisF subunit catalyzes the cyclization activity that produces IGP and AICAR from PRFAR using the ammonia provided by the HisH subunit. The sequence is that of Imidazole glycerol phosphate synthase subunit HisF from Metallosphaera sedula (strain ATCC 51363 / DSM 5348 / JCM 9185 / NBRC 15509 / TH2).